The sequence spans 648 residues: 5-aminolevulinate synthase, mitochondrial (648 aa).

Residues 1-26 constitute a mitochondrion transit peptide; that stretch reads MEALLQQSRAMCPFLKRSSPNTLRSL. The segment at 69-109 is disordered; sequence KRFTSSAAGVPGAGAGTPKPTRGSPGKRALHSTGGNGANMS. Residues Arg-170, Ser-283, and Lys-302 each coordinate substrate. Ser-335, His-363, and Thr-409 together coordinate pyridoxal 5'-phosphate. The active site involves Lys-412. The residue at position 412 (Lys-412) is an N6-(pyridoxal phosphate)lysine. 2 residues coordinate pyridoxal 5'-phosphate: Thr-441 and Thr-442. Thr-527 is a binding site for substrate.

It belongs to the class-II pyridoxal-phosphate-dependent aminotransferase family. In terms of assembly, homodimer. Requires pyridoxal 5'-phosphate as cofactor.

It localises to the mitochondrion matrix. It carries out the reaction succinyl-CoA + glycine + H(+) = 5-aminolevulinate + CO2 + CoA. The protein operates within porphyrin-containing compound metabolism; protoporphyrin-IX biosynthesis; 5-aminolevulinate from glycine: step 1/1. Catalyzes the synthesis of 5-aminolevulinate (ALA) from succinyl-CoA and glycine, the first and rate-limiting step in heme biosynthesis. The polypeptide is 5-aminolevulinate synthase, mitochondrial (hemA) (Emericella nidulans (strain FGSC A4 / ATCC 38163 / CBS 112.46 / NRRL 194 / M139) (Aspergillus nidulans)).